Reading from the N-terminus, the 130-residue chain is MSKKTDEILDSLKSLSLLEASELVKQIEEAFGVSAAASAGVVMAAPGAATGGGEAAAEEKTEFDVVLESFDASAKIKVLKEVRNATGLGLGDAKAMVEAAPKTIKEGASKEDAEALKKAIEAVGGKVTLK.

This sequence belongs to the bacterial ribosomal protein bL12 family. As to quaternary structure, homodimer. Part of the ribosomal stalk of the 50S ribosomal subunit. Forms a multimeric L10(L12)X complex, where L10 forms an elongated spine to which 2 to 4 L12 dimers bind in a sequential fashion. Binds GTP-bound translation factors.

In terms of biological role, forms part of the ribosomal stalk which helps the ribosome interact with GTP-bound translation factors. Is thus essential for accurate translation. The sequence is that of Large ribosomal subunit protein bL12 from Prochlorococcus marinus (strain SARG / CCMP1375 / SS120).